Here is a 503-residue protein sequence, read N- to C-terminus: SWI/SNF and RSC complexes subunit ssr2 (503 aa).

An SWIRM domain is found at 18–115; that stretch reads IIVPSYAGWF…YQIDPETRPA (98 aa). Ser175 bears the Phosphoserine mark. The ZZ-type; degenerate zinc-finger motif lies at 188–242; it reads RVDKVCFTCGVNCSQTWYHNLKNKKYDICPNCYKQGRFSSSFNSSDFLCMDAIDF. Residues Cys193, Cys196, Cys216, and Cys219 each contribute to the Zn(2+) site. One can recognise an SANT domain in the interval 245-296; the sequence is DEEKPWSNQETLLLLEAIETYGDDWNQIALHVGSRTKEQCLIHFLQIPIEDP. Ser306 is modified (phosphoserine).

The protein belongs to the SMARCC family. Component of the RSC complex composed of at least arp9, arp42, rsc1, rsc4, rsc7, rsc9, rsc58, sfh1, snf21, ssr1, ssr2, ssr3 and ssr4. The complex interacts with histone and histone variant components of centromeric chromatin. Component of the SWI/SNF global transcription activator complex composed of at least arp9, arp42, snf5, snf22, snf30, sbf59, sol1, ssr1, ssr2, ssr3, ssr4 and tfg3.

The protein resides in the cytoplasm. The protein localises to the nucleus. In terms of biological role, component of the chromatin structure remodeling complex (RSC), which is involved in transcription regulation and nucleosome positioning. Controls particularly membrane and organelle development genes. Part of the SWI/SNF complex, an ATP-dependent chromatin remodeling complex, required for the positive and negative regulation of gene expression of a large number of genes. It changes chromatin structure by altering DNA-histone contacts within a nucleosome, leading eventually to a change in nucleosome position, thus facilitating or repressing binding of gene-specific transcription factors. The chain is SWI/SNF and RSC complexes subunit ssr2 (ssr2) from Schizosaccharomyces pombe (strain 972 / ATCC 24843) (Fission yeast).